A 472-amino-acid chain; its full sequence is tRNA-2-methylthio-N(6)-dimethylallyladenosine synthase (472 aa).

One can recognise an MTTase N-terminal domain in the interval 22–138 (RSYWITTFGC…LETLLQQVDS (117 aa)). [4Fe-4S] cluster contacts are provided by Cys-31, Cys-67, Cys-101, Cys-173, Cys-177, and Cys-180. Positions 159 to 396 (RDSAICGWVN…NALVERNARE (238 aa)) constitute a Radical SAM core domain. Residues 399-467 (IRYQGRTEEV…SFSLSGTPLP (69 aa)) form the TRAM domain.

This sequence belongs to the methylthiotransferase family. MiaB subfamily. As to quaternary structure, monomer. [4Fe-4S] cluster serves as cofactor.

It localises to the cytoplasm. The enzyme catalyses N(6)-dimethylallyladenosine(37) in tRNA + (sulfur carrier)-SH + AH2 + 2 S-adenosyl-L-methionine = 2-methylsulfanyl-N(6)-dimethylallyladenosine(37) in tRNA + (sulfur carrier)-H + 5'-deoxyadenosine + L-methionine + A + S-adenosyl-L-homocysteine + 2 H(+). Functionally, catalyzes the methylthiolation of N6-(dimethylallyl)adenosine (i(6)A), leading to the formation of 2-methylthio-N6-(dimethylallyl)adenosine (ms(2)i(6)A) at position 37 in tRNAs that read codons beginning with uridine. This Synechococcus sp. (strain CC9902) protein is tRNA-2-methylthio-N(6)-dimethylallyladenosine synthase.